Consider the following 130-residue polypeptide: Ribonuclease VapC22 (130 aa).

The PINc domain occupies 4–119; the sequence is VLLDSHVAYW…RLVTKDRRLR (116 aa). 2 residues coordinate Mg(2+): aspartate 7 and aspartate 97.

Belongs to the PINc/VapC protein family. Mg(2+) serves as cofactor.

The protein localises to the secreted. Toxic component of a type II toxin-antitoxin (TA) system. An RNase. Upon expression in M.smegmatis inhibits translation and colony formation. Its toxic effect on colony formation is neutralized by coexpression with cognate antitoxin VapB22; the effect on translation has not been tested but is probably neutralized also. The polypeptide is Ribonuclease VapC22 (Mycobacterium tuberculosis (strain ATCC 25618 / H37Rv)).